Here is a 336-residue protein sequence, read N- to C-terminus: Inositol 2-dehydrogenase (336 aa).

The protein belongs to the Gfo/Idh/MocA family. In terms of assembly, homotetramer.

The enzyme catalyses myo-inositol + NAD(+) = scyllo-inosose + NADH + H(+). Involved in the oxidation of myo-inositol (MI) to 2-keto-myo-inositol (2KMI or 2-inosose). The polypeptide is Inositol 2-dehydrogenase (Paracoccus denitrificans (strain Pd 1222)).